Consider the following 352-residue polypeptide: UDP-N-acetylglucosamine--N-acetylmuramyl-(pentapeptide) pyrophosphoryl-undecaprenol N-acetylglucosamine transferase (352 aa).

Residues serine 195 and glutamine 287 each contribute to the UDP-N-acetyl-alpha-D-glucosamine site.

The protein belongs to the glycosyltransferase 28 family. MurG subfamily.

It localises to the cell membrane. The enzyme catalyses Mur2Ac(oyl-L-Ala-gamma-D-Glu-L-Lys-D-Ala-D-Ala)-di-trans,octa-cis-undecaprenyl diphosphate + UDP-N-acetyl-alpha-D-glucosamine = beta-D-GlcNAc-(1-&gt;4)-Mur2Ac(oyl-L-Ala-gamma-D-Glu-L-Lys-D-Ala-D-Ala)-di-trans,octa-cis-undecaprenyl diphosphate + UDP + H(+). The protein operates within cell wall biogenesis; peptidoglycan biosynthesis. Its function is as follows. Cell wall formation. Catalyzes the transfer of a GlcNAc subunit on undecaprenyl-pyrophosphoryl-MurNAc-pentapeptide (lipid intermediate I) to form undecaprenyl-pyrophosphoryl-MurNAc-(pentapeptide)GlcNAc (lipid intermediate II). This chain is UDP-N-acetylglucosamine--N-acetylmuramyl-(pentapeptide) pyrophosphoryl-undecaprenol N-acetylglucosamine transferase, found in Streptococcus pneumoniae serotype 19F (strain G54).